Here is a 20-residue protein sequence, read N- to C-terminus: Superoxide dismutase [Mn], mitochondrial (20 aa).

It belongs to the iron/manganese superoxide dismutase family. In terms of assembly, homotetramer. Mn(2+) is required as a cofactor.

The protein localises to the mitochondrion matrix. The catalysed reaction is 2 superoxide + 2 H(+) = H2O2 + O2. Its function is as follows. Destroys superoxide anion radicals which are normally produced within the cells and which are toxic to biological systems. This is Superoxide dismutase [Mn], mitochondrial (SODA) from Hordeum vulgare (Barley).